Consider the following 183-residue polypeptide: Adenine phosphoribosyltransferase (183 aa).

It belongs to the purine/pyrimidine phosphoribosyltransferase family. As to quaternary structure, homodimer.

The protein resides in the cytoplasm. The catalysed reaction is AMP + diphosphate = 5-phospho-alpha-D-ribose 1-diphosphate + adenine. The protein operates within purine metabolism; AMP biosynthesis via salvage pathway; AMP from adenine: step 1/1. In terms of biological role, catalyzes a salvage reaction resulting in the formation of AMP, that is energically less costly than de novo synthesis. In Shewanella sp. (strain MR-7), this protein is Adenine phosphoribosyltransferase.